We begin with the raw amino-acid sequence, 595 residues long: APOBEC1 complementation factor (595 aa).

RRM domains lie at cysteine 56–aspartate 134, cysteine 136–proline 218, and lysine 231–proline 303. The interval histidine 360–arginine 409 is required for nuclear localization.

As to quaternary structure, part of the apolipoprotein B mRNA editing complex with APOBEC1. Interacts with TNPO2; TNPO2 may be responsible for transport of A1CF into the nucleus. Interacts with SYNCRIP. Interacts with CELF2/CUGBP2. Interacts with RBM47. In terms of tissue distribution, expressed primarily in liver, small intestine and kidney.

The protein localises to the nucleus. It localises to the endoplasmic reticulum. The protein resides in the cytoplasm. In terms of biological role, essential component of the apolipoprotein B mRNA editing enzyme complex which is responsible for the postranscriptional editing of a CAA codon for Gln to a UAA codon for stop in APOB mRNA. Binds to APOB mRNA and is probably responsible for docking the catalytic subunit, APOBEC1, to the mRNA to allow it to deaminate its target cytosine. The complex also seems to protect the edited APOB mRNA from nonsense-mediated decay. The chain is APOBEC1 complementation factor (A1cf) from Mus musculus (Mouse).